The sequence spans 506 residues: MNTITLTPGQLSLSQLYDVWRHPVQLRLDASAIDGINASVACVNDIVAEGRTAYGINTGFGLLAQTRIADEDLQNLQRSLVLSHAAGVGDPLDDAMVRLIMVLKINSLARGFSGIRLSVIEALIALVNAGVYPLIPAKGSVGASGDLAPLAHLSLTLLGEGKARWQGEWLPAQTALKKAGLEPVALAAKEGLALLNGTQASTAFALRGLFEAQELFASAVVCGALTTEAVLGSRRPFDARIHAARGQQGQIDVARLFRHLLTDTSAIAESHHHCHKVQDPYSLRCQPQVMGACLTQLRQTKEVLLAEANAVSDNPLVFADAGEVISGGNFHAEPVAMAADNLALAIAEIGALSERRIALMMDKHMSQLPPFLVKNGGVNSGFMIAQVTAAALASENKALAHPHSVDSLPTSANQEDHVSMAPAAGRRLWEMAANTRGIIAVEWLAACQGIDLREGLTSSPLLEQARQTLRERVAHYTQDRFFAPDIECATALLAQGALQRLVPDFM.

Residues 143-145 (ASG) constitute a cross-link (5-imidazolinone (Ala-Gly)). Residue Ser144 is modified to 2,3-didehydroalanine (Ser).

The protein belongs to the PAL/histidase family. Contains an active site 4-methylidene-imidazol-5-one (MIO), which is formed autocatalytically by cyclization and dehydration of residues Ala-Ser-Gly.

It localises to the cytoplasm. It catalyses the reaction L-histidine = trans-urocanate + NH4(+). It participates in amino-acid degradation; L-histidine degradation into L-glutamate; N-formimidoyl-L-glutamate from L-histidine: step 1/3. The protein is Histidine ammonia-lyase of Salmonella schwarzengrund (strain CVM19633).